The primary structure comprises 278 residues: Orotidine 5'-phosphate decarboxylase (278 aa).

The active-site Proton donor is the Lys-95.

The protein belongs to the OMP decarboxylase family. Type 2 subfamily.

The catalysed reaction is orotidine 5'-phosphate + H(+) = UMP + CO2. The protein operates within pyrimidine metabolism; UMP biosynthesis via de novo pathway; UMP from orotate: step 2/2. This Corynebacterium glutamicum (strain ATCC 13032 / DSM 20300 / JCM 1318 / BCRC 11384 / CCUG 27702 / LMG 3730 / NBRC 12168 / NCIMB 10025 / NRRL B-2784 / 534) protein is Orotidine 5'-phosphate decarboxylase.